Here is a 359-residue protein sequence, read N- to C-terminus: Tropomodulin-1 (359 aa).

The segment at 36–61 (ELDPDNALLPAGLRQKDQTTKAPTGP) is disordered. The tract at residues 39–138 (PDNALLPAGL…CDIAAILGMH (100 aa)) is tropomyosin-binding.

It belongs to the tropomodulin family. As to quaternary structure, binds to the N-terminus of tropomyosin and to actin. Interacts with FLII. In terms of tissue distribution, highly expressed in the erythrocyte, heart and skeletal muscle.

The protein localises to the cytoplasm. The protein resides in the cytoskeleton. Blocks the elongation and depolymerization of the actin filaments at the pointed end. The Tmod/TM complex contributes to the formation of the short actin protofilament, which in turn defines the geometry of the membrane skeleton. May play an important role in regulating the organization of actin filaments by preferentially binding to a specific tropomyosin isoform at its N-terminus. In Homo sapiens (Human), this protein is Tropomodulin-1 (TMOD1).